A 480-amino-acid chain; its full sequence is Flotillin-like protein 2 (480 aa).

Cys37 is lipidated: S-palmitoyl cysteine. Positions 237-257 (ENQREAEVAQANSELAKKKAA) form a coiled coil.

The protein belongs to the band 7/mec-2 family. Flotillin subfamily. Post-translationally, may be palmitoylated. In terms of tissue distribution, expressed in flowers in green pods. Primarily expressed in vascular tissues. Upon induction of nodulation, expansion of expression in the root cortex in the region of elongating root hairs, which will eventually become colonized by bacteria. Expressed in the infection zone in nodules.

It is found in the cell membrane. Its subcellular location is the membrane. The protein localises to the caveola. In terms of biological role, may act as a scaffolding protein within caveolar membranes, functionally participating in formation of caveolae or caveolae-like vesicles. Required for early symbiotic events and nodules formation. The chain is Flotillin-like protein 2 (FLOT2) from Medicago truncatula (Barrel medic).